The primary structure comprises 1458 residues: ATPase family AAA domain-containing protein 2B (1458 aa).

Residues 1 to 155 (MVNTRKSSLR…LRGEKKGDGD (155 aa)) are disordered. At S16 the chain carries Phosphoserine. A compositionally biased stretch (gly residues) spans 23-33 (PGAGAEPGATG). Positions 34 to 58 (GSSHFISSRTRSSKTRAASCPAAKA) are enriched in low complexity. A phosphoserine mark is found at S79, S81, and S86. Over residues 99–115 (VCKDKSKSRSTGQREEW) the composition is skewed to basic and acidic residues. Residues 116-129 (NLSTGQARLTSQPG) show a composition bias toward polar residues. A Phosphoserine modification is found at S140. T221 carries the phosphothreonine modification. Residues 244-286 (NSYGIQNHHEVSTEGEEEESQEEDGDIEVEEAEGEENDRPYNL) are disordered. Positions 256–279 (TEGEEEESQEEDGDIEVEEAEGEE) are enriched in acidic residues. At S318 the chain carries Phosphoserine. Basic residues predominate over residues 321–332 (RRSHIRRKKHAI). Residues 321 to 353 (RRSHIRRKKHAIHSSDTTSSDEERFERRKSKSM) form a disordered region. An ATP-binding site is contributed by 441–448 (GPPGTGKT). S939 carries the post-translational modification Phosphoserine. A coiled-coil region spans residues 943–974 (QLSESEKSRMEDQEENTLRELRLFLRDVTKRL). Positions 951 to 1066 (RMEDQEENTL…DTAHAIIAAE (116 aa)) constitute a Bromo domain. 3 disordered regions span residues 1189–1208 (DCHEENGEETGDLSMTNDES), 1217–1257 (QGQR…EQTS), and 1309–1330 (LLEDQSKEKPETSTENHGDDLE). A compositionally biased stretch (low complexity) spans 1240 to 1252 (NESLLVNSSSSLN). Residues S1338 and S1347 each carry the phosphoserine modification.

This sequence belongs to the AAA ATPase family. As to quaternary structure, binds acetylated lysine residues in histone H1.4, H2A, H2B, H3 and H4 (in vitro).

Its subcellular location is the nucleus. This chain is ATPase family AAA domain-containing protein 2B (ATAD2B), found in Homo sapiens (Human).